We begin with the raw amino-acid sequence, 431 residues long: MIEKGAEISGKRRGRNNAANSKSLGTNVNGSNSWEEGSSSSSSDDEPGGGGMRVGLQYQAVVPEFDQEVAKNCQERENLGMLVWSPNQNISEAKLDEYISVAKEKHGYNMEQALGMLFWHKHNIEKSLADLLNFTPFPDEWTVEDRVLFEQAFSFHGKTFHRIQQMLPDKSIASLVKFYYSWKKTRSKTSVMDRHARKQKREREGSGDEIEETNGANPVDIEIEQPKEAKKEVPKNDTVPHIKKEKHPSQAKNRAKRKPPNGMFLSQEDVEAVSANANAATTVLRQLDMELVSIKRQIQNIKQTNSAFKEKLQGGIEDYRIQEVSQKFNARWTTEEQLLAVQAIRMYGRDFQAISDVIGNKSVVQVKNFFVNYRRRFNIDQVLQEWEAEHGKTEENGDCTEKAVKLPETAIKMSDEEEEASLLDITYPSAS.

Over residues 1-10 (MIEKGAEISG) the composition is skewed to basic and acidic residues. A disordered region spans residues 1–53 (MIEKGAEISGKRRGRNNAANSKSLGTNVNGSNSWEEGSSSSSSDDEPGGGGMR). The segment covering 17–28 (NAANSKSLGTNV) has biased composition (polar residues). Residues 29-42 (NGSNSWEEGSSSSS) are compositionally biased toward low complexity. Positions 50–135 (GGMRVGLQYQ…KSLADLLNFT (86 aa)) constitute an ELM2 domain. The region spanning 136–187 (PFPDEWTVEDRVLFEQAFSFHGKTFHRIQQMLPDKSIASLVKFYYSWKKTRS) is the SANT 1 domain. Residues 190 to 262 (SVMDRHARKQ…NRAKRKPPNG (73 aa)) are disordered. A compositionally biased stretch (basic and acidic residues) spans 224–242 (EQPKEAKKEVPKNDTVPHI). Residues 267 to 314 (QEDVEAVSANANAATTVLRQLDMELVSIKRQIQNIKQTNSAFKEKLQG) are a coiled coil. The SANT 2 domain maps to 327 to 378 (KFNARWTTEEQLLAVQAIRMYGRDFQAISDVIGNKSVVQVKNFFVNYRRRFN).

This sequence belongs to the CoREST family. In terms of assembly, component of a BHC histone deacetylase complex that contains KDM1A. Expressed in territories in which neurogenesis takes place.

It is found in the nucleus. Its function is as follows. Essential component of the BHC complex, a corepressor complex that represses transcription of neuron-specific genes in non-neuronal cells. The BHC complex is recruited at RE1/NRSE sites by REST and acts by deacetylating and demethylating specific sites on histones, thereby acting as a chromatin modifier. In the BHC complex, it serves as a molecular beacon for the recruitment of molecular machinery that imposes silencing across a chromosomal interval. Plays a central role in demethylation of Lys-4 of histone H3 by promoting demethylase activity of KDM1A on core histones and nucleosomal substrates. The sequence is that of REST corepressor 1 (rcor1) from Xenopus laevis (African clawed frog).